The sequence spans 70 residues: Dermaseptin-PH (70 aa).

The signal sequence occupies residues 1-22; it reads MDILKKSLFLILFLGVVSLSIC. Residues 23–44 constitute a propeptide that is removed on maturation; the sequence is EEEKRENEEEMEQDDEQSEMKR. Q67 is modified (glutamine amide). A propeptide spanning residues 68–70 is cleaved from the precursor; that stretch reads GGQ.

The protein belongs to the frog skin active peptide (FSAP) family. Expressed by the skin glands.

It localises to the secreted. The protein localises to the target cell membrane. In terms of biological role, antimicrobial peptide which inhibits the growth of Gram-negative (MIC=16-64 uM) and Gram-positive bacteria (MIC=32 uM), and pathogenic yeast Candida albicans (MIC=16 uM). Shows a broad-spectrum of anticancer activities against several cancer cell lines. Also shows slight cytotoxicity on human dermal microvascular endothelium cells (IC(50)=4.85 uM). Induces low hemolysis against horse erythrocytes. The chain is Dermaseptin-PH from Pithecopus hypochondrialis (Orange-legged leaf frog).